We begin with the raw amino-acid sequence, 136 residues long: Ribonuclease VapC1 (136 aa).

The 112-residue stretch at 18–129 folds into the PINc domain; sequence ILVDTSVLID…KKHFERLKEF (112 aa). 2 residues coordinate Mg(2+): D21 and D101.

This sequence belongs to the PINc/VapC protein family. Requires Mg(2+) as cofactor.

Its function is as follows. Toxic component of a type II toxin-antitoxin (TA) system. An RNase. Its cognate antitoxin is VapB1. The polypeptide is Ribonuclease VapC1 (Methanocaldococcus jannaschii (strain ATCC 43067 / DSM 2661 / JAL-1 / JCM 10045 / NBRC 100440) (Methanococcus jannaschii)).